We begin with the raw amino-acid sequence, 101 residues long: NAD(P)H-quinone oxidoreductase subunit 4L, chloroplastic (101 aa).

A run of 3 helical transmembrane segments spans residues 2–22 (ILEH…YGLI), 32–52 (MCLE…SDFF), and 61–81 (IFCI…LAIV).

The protein belongs to the complex I subunit 4L family. NDH is composed of at least 16 different subunits, 5 of which are encoded in the nucleus.

It localises to the plastid. Its subcellular location is the chloroplast thylakoid membrane. It catalyses the reaction a plastoquinone + NADH + (n+1) H(+)(in) = a plastoquinol + NAD(+) + n H(+)(out). It carries out the reaction a plastoquinone + NADPH + (n+1) H(+)(in) = a plastoquinol + NADP(+) + n H(+)(out). In terms of biological role, NDH shuttles electrons from NAD(P)H:plastoquinone, via FMN and iron-sulfur (Fe-S) centers, to quinones in the photosynthetic chain and possibly in a chloroplast respiratory chain. The immediate electron acceptor for the enzyme in this species is believed to be plastoquinone. Couples the redox reaction to proton translocation, and thus conserves the redox energy in a proton gradient. In Aethionema cordifolium (Lebanon stonecress), this protein is NAD(P)H-quinone oxidoreductase subunit 4L, chloroplastic.